The sequence spans 120 residues: Ribosome-binding factor A (120 aa).

The protein belongs to the RbfA family. Monomer. Binds 30S ribosomal subunits, but not 50S ribosomal subunits or 70S ribosomes.

Its subcellular location is the cytoplasm. In terms of biological role, one of several proteins that assist in the late maturation steps of the functional core of the 30S ribosomal subunit. Associates with free 30S ribosomal subunits (but not with 30S subunits that are part of 70S ribosomes or polysomes). Required for efficient processing of 16S rRNA. May interact with the 5'-terminal helix region of 16S rRNA. The chain is Ribosome-binding factor A from Chlamydia felis (strain Fe/C-56) (Chlamydophila felis).